A 167-amino-acid polypeptide reads, in one-letter code: NAD(P)H-quinone oxidoreductase subunit I, chloroplastic (167 aa).

4Fe-4S ferredoxin-type domains follow at residues 55–84 and 95–124; these read GRIHFEFDKCIACEVCVRVCPIDLPVVDWK and LNYSIDFGICIFCGNCVEYCPTNCLSMTEE. [4Fe-4S] cluster-binding residues include Cys-64, Cys-67, Cys-70, Cys-74, Cys-104, Cys-107, Cys-110, and Cys-114.

The protein belongs to the complex I 23 kDa subunit family. In terms of assembly, NDH is composed of at least 16 different subunits, 5 of which are encoded in the nucleus. The cofactor is [4Fe-4S] cluster.

Its subcellular location is the plastid. The protein localises to the chloroplast thylakoid membrane. The enzyme catalyses a plastoquinone + NADH + (n+1) H(+)(in) = a plastoquinol + NAD(+) + n H(+)(out). It catalyses the reaction a plastoquinone + NADPH + (n+1) H(+)(in) = a plastoquinol + NADP(+) + n H(+)(out). Functionally, NDH shuttles electrons from NAD(P)H:plastoquinone, via FMN and iron-sulfur (Fe-S) centers, to quinones in the photosynthetic chain and possibly in a chloroplast respiratory chain. The immediate electron acceptor for the enzyme in this species is believed to be plastoquinone. Couples the redox reaction to proton translocation, and thus conserves the redox energy in a proton gradient. This Arabis hirsuta (Hairy rock-cress) protein is NAD(P)H-quinone oxidoreductase subunit I, chloroplastic.